Reading from the N-terminus, the 160-residue chain is uncharacterized protein (160 aa).

The Extracellular portion of the chain corresponds to 1-33 (MPLRPCRHHQGFLPKKQWRAKFPQLIVLMGRVA). The chain crosses the membrane as a helical span at residues 34 to 54 (AEELLPAVAVAAVVVAVVVAV). Topologically, residues 55-68 (ERVVPLLFVHRPDS) are cytoplasmic. Residues 69-89 (FFLIFFFQSCFVCCCCCCSCS) traverse the membrane as a helical segment. Residues 90-119 (TSLKAYSSEKEKQKYGKRGNGNTPLVQRLV) lie on the Extracellular side of the membrane. Residues 120–140 (TLSYLALLILVLSIELLTWFV) form a helical membrane-spanning segment. The Cytoplasmic segment spans residues 141 to 160 (KKQRTGNKKQKDKEKNALLL).

Its subcellular location is the membrane. This is an uncharacterized protein from Saccharomyces cerevisiae (strain ATCC 204508 / S288c) (Baker's yeast).